We begin with the raw amino-acid sequence, 604 residues long: Linalool synthase Tps-5042L13, chloroplastic (604 aa).

The transit peptide at 1-34 directs the protein to the chloroplast; it reads MSSMRIYVAIMKKPSVKHVDNVDKKASKPSWRVS. (2E)-geranyl diphosphate contacts are provided by Arg-323, Asp-360, Asp-364, Arg-501, and Asp-504. Mg(2+) contacts are provided by Asp-360 and Asp-364. The short motif at 360-364 is the DDXXD motif element; the sequence is DDVYD. Mg(2+) is bound by residues Asp-504, Thr-508, and Glu-512.

This sequence belongs to the terpene synthase family. Tpsb subfamily. Monomer. Mg(2+) is required as a cofactor. The cofactor is Mn(2+).

The protein resides in the plastid. Its subcellular location is the chloroplast. It carries out the reaction (2E)-geranyl diphosphate + H2O = linalool + diphosphate. It participates in secondary metabolite biosynthesis; terpenoid biosynthesis. Functionally, monoterpene synthase (mono-TPS) involved in the biosynthesis of monoterpenes natural products. Catalyzes the conversion of (2E)-geranyl diphosphate (GPP) into linalool. This chain is Linalool synthase Tps-5042L13, chloroplastic, found in Perilla frutescens (Beefsteak mint).